A 359-amino-acid polypeptide reads, in one-letter code: Cinnamyl alcohol dehydrogenase 8 (359 aa).

Cys-46 contacts Zn(2+). Ser-48 contributes to the NADP(+) binding site. Zn(2+) is bound by residues His-68, Glu-69, Cys-99, Cys-102, Cys-105, Cys-113, and Cys-162. Residues Thr-166, 187–192 (GLGGLG), 210–215 (STSEKK), Thr-250, Gly-274, and 297–299 (SMI) each bind NADP(+).

Belongs to the zinc-containing alcohol dehydrogenase family. In terms of assembly, homodimer. It depends on Zn(2+) as a cofactor. Expressed in the differentiation and elongation zones of primary and lateral roots. Expressed in the hypocotyl, cotyledon veins, vasculature of the first rosette leaves, hydathodes and trichomes. In stems, expressed in the vascular cambium and developing xylem tissues. Expressed in the style, anthers, stamen filaments, stigmatic regions in flowers, and abscission and style regions of siliques.

It carries out the reaction (E)-cinnamyl alcohol + NADP(+) = (E)-cinnamaldehyde + NADPH + H(+). The protein operates within aromatic compound metabolism; phenylpropanoid biosynthesis. Involved in lignin biosynthesis. Catalyzes the final step specific for the production of lignin monomers. Catalyzes the NADPH-dependent reduction of coniferaldehyde, 5-hydroxyconiferaldehyde, sinapaldehyde, 4-coumaraldehyde and caffeyl aldehyde to their respective alcohols. In Arabidopsis thaliana (Mouse-ear cress), this protein is Cinnamyl alcohol dehydrogenase 8 (CAD8).